Here is an 814-residue protein sequence, read N- to C-terminus: Pre-rRNA-processing protein TSR1 homolog (814 aa).

A disordered region spans residues 1–67 (MADHAFHRPG…NQMNQLRKNK (67 aa)). A compositionally biased stretch (basic residues) spans 16–27 (NKAHKTGRHRSK). The Bms1-type G domain occupies 84-249 (APFLVCLLPM…MRRIGGQKKR (166 aa)). Disordered stretches follow at residues 316–357 (PYKL…DAEQ) and 392–448 (WIPD…EEFQ). Over residues 317 to 340 (YKLDKSRDGENSEVRLLDRSDPSK) the composition is skewed to basic and acidic residues. Acidic residues predominate over residues 395 to 426 (DVEEVEDPDGKDDDDMSEDDDDDKEDDNEDFM). The segment covering 431–442 (KSFEDEYEKRDS) has biased composition (basic and acidic residues). Thr-444 bears the Phosphothreonine mark.

Belongs to the TRAFAC class translation factor GTPase superfamily. Bms1-like GTPase family. TSR1 subfamily.

The protein resides in the nucleus. Its subcellular location is the nucleolus. Functionally, required during maturation of the 40S ribosomal subunit in the nucleolus. The polypeptide is Pre-rRNA-processing protein TSR1 homolog (Drosophila melanogaster (Fruit fly)).